Reading from the N-terminus, the 130-residue chain is Small ribosomal subunit protein uS8 (130 aa).

Belongs to the universal ribosomal protein uS8 family. In terms of assembly, part of the 30S ribosomal subunit. Contacts proteins S5 and S12.

Its function is as follows. One of the primary rRNA binding proteins, it binds directly to 16S rRNA central domain where it helps coordinate assembly of the platform of the 30S subunit. This Shewanella sp. (strain MR-7) protein is Small ribosomal subunit protein uS8.